A 175-amino-acid polypeptide reads, in one-letter code: Thioredoxin-like protein CITRX, chloroplastic (175 aa).

The N-terminal 73 residues, 1–73 (MQAASLAFHP…REDYLVKKLS (73 aa)), are a transit peptide targeting the chloroplast. The Thioredoxin domain maps to 74–175 (AKEIQELIKG…MMRDIINNDL (102 aa)). Catalysis depends on nucleophile residues Cys-98 and Cys-101. An intrachain disulfide couples Cys-98 to Cys-101.

The protein belongs to the thioredoxin family. Plant CITRX-type subfamily.

Its subcellular location is the plastid. The protein resides in the chloroplast. Its function is as follows. Probable thiol-disulfide oxidoreductase that may play a role in proper chloroplast development. The chain is Thioredoxin-like protein CITRX, chloroplastic from Solanum tuberosum (Potato).